Reading from the N-terminus, the 58-residue chain is U11-myrmicitoxin-Tb1a (58 aa).

The propeptide occupies 1-24 (LAMAMGDAVADAQARAMAAAYAIA). C34 and C57 are joined by a disulfide.

The protein belongs to the formicidae venom precursor-01 superfamily. In terms of tissue distribution, expressed by the venom gland.

It localises to the secreted. The protein resides in the target cell membrane. Neurotoxin that causes irreversible rapid flaccid paralysis in blowflies and honeybees upon intrathoracic injection. Causes a quick and irreversible cytolytic effect (at 10 uM) indicating it possibly acts as a pore-forming peptide. Shows only weak effect on aphids (A.pisum) at high doses 24 hours post intrathoracic injection. In vitro, is not cytotoxic on the dipteran S2 Drosophila embryonic cell line. The polypeptide is U11-myrmicitoxin-Tb1a (Tetramorium bicarinatum (Tramp ant)).